The sequence spans 737 residues: Lysyl oxidase homolog 2A (737 aa).

The first 18 residues, 1–18 (MAVSSALCIFSLLVLAQA), serve as a signal peptide directing secretion. SRCR domains are found at residues 29–130 (LRLA…VICN), 159–270 (IRPI…VSCV), 294–393 (VRLR…VRCN), and 403–512 (IRLS…VSCS). 9 disulfides stabilise this stretch: cysteine 55–cysteine 119, cysteine 68–cysteine 129, cysteine 99–cysteine 109, cysteine 188–cysteine 259, cysteine 201–cysteine 269, cysteine 235–cysteine 245, cysteine 319–cysteine 382, cysteine 332–cysteine 392, and cysteine 363–cysteine 373. An N-linked (GlcNAc...) asparagine glycan is attached at asparagine 256. A glycan (N-linked (GlcNAc...) asparagine) is linked at asparagine 423. 3 disulfide bridges follow: cysteine 432-cysteine 498, cysteine 445-cysteine 511, and cysteine 479-cysteine 489. The segment at 516–718 (PDLVLNAQLV…WTYSCHIGGS (203 aa)) is lysyl-oxidase like. Residues aspartate 517 and leucine 518 each coordinate Ca(2+). 4 disulfide bridges follow: cysteine 541/cysteine 592, cysteine 547/cysteine 662, cysteine 624/cysteine 640, and cysteine 630/cysteine 652. The Cu cation site is built by histidine 593, histidine 595, and histidine 597. Asparagine 611 carries N-linked (GlcNAc...) asparagine glycosylation. Positions 620–656 (KASFCLEDTHCDEGISKRYHCANFGEQGITVGCWDTY) form a cross-link, lysine tyrosylquinone (Lys-Tyr). 2',4',5'-topaquinone is present on tyrosine 656. Residues glutamate 689, aspartate 691, asparagine 694, and asparagine 695 each coordinate Ca(2+). Cysteine 699 and cysteine 713 are disulfide-bonded.

This sequence belongs to the lysyl oxidase family. It depends on Cu cation as a cofactor. Lysine tyrosylquinone residue is required as a cofactor. In terms of processing, the lysine tyrosylquinone cross-link (LTQ) is generated by condensation of the epsilon-amino group of a lysine with a topaquinone produced by oxidation of tyrosine.

The protein localises to the secreted. The protein resides in the extracellular space. It is found in the extracellular matrix. It localises to the basement membrane. Its subcellular location is the nucleus. The protein localises to the chromosome. The protein resides in the endoplasmic reticulum. It carries out the reaction L-lysyl-[protein] + O2 + H2O = (S)-2-amino-6-oxohexanoyl-[protein] + H2O2 + NH4(+). Mediates the post-translational oxidative deamination of lysine residues on target proteins leading to the formation of deaminated lysine (allysine). Acts as a transcription corepressor and specifically mediates deamination of trimethylated 'Lys-4' of histone H3 (H3K4me3), a specific tag for epigenetic transcriptional activation. Shows no activity against histone H3 when it is trimethylated on 'Lys-9' (H3K9me3) or 'Lys-27' (H3K27me3) or when 'Lys-4' is monomethylated (H3K4me1) or dimethylated (H3K4me2). Also mediates deamination of methylated TAF10, a member of the transcription factor IID (TFIID) complex, which induces release of TAF10 from promoters, leading to inhibition of TFIID-dependent transcription. LOXL2-mediated deamination of TAF10 results in transcriptional repression of genes required for embryonic stem cell pluripotency. Involved in epithelial to mesenchymal transition (EMT) and participates in repression of E-cadherin, probably by mediating deamination of histone H3. When secreted into the extracellular matrix, promotes cross-linking of extracellular matrix proteins by mediating oxidative deamination of peptidyl lysine residues in precursors to fibrous collagen and elastin. Acts as a regulator of sprouting angiogenesis, probably via collagen IV scaffolding. Acts as a regulator of chondrocyte differentiation, probably by regulating expression of factors that control chondrocyte differentiation. Required with loxl2b for correct expression of Sox2 and for neural differentiation. The protein is Lysyl oxidase homolog 2A (loxl2a) of Danio rerio (Zebrafish).